Reading from the N-terminus, the 496-residue chain is MEISIPTTLGLAVIIFIIFKLLTRTTSKKNLLPEPWRLPIIGHMHHLIGTMPHRGVMELARKHGSLMHLQLGEVSTIVVSSPRWAKEVLTTYDITFANRPETLTGEIVAYHNTDIVLAPYGEYWRQLRKLCTLELLSNKKVKSFQSLREEECWNLVKDIRSTGQGSPINLSENIFKMIATILSRAAFGKGIKDQMKFTELVKEILRLTGGFDVADIFPSKKLLHHLSGKRAKLTNIHNKLDNLINNIIAEHPGNRTSSSQETLLDVLLRLKESAEFPLTADNVKAVILDMFGAGTDTSSATIEWAISELIRCPRAMEKVQTELRQALNGKERIQEEDLQELNYLKLVIKETLRLHPPLPLVMPRECREPCVLGGYDIPSKTKLIVNVFAINRDPEYWKDAETFMPERFENSPITVMGSEYEYLPFGAGRRMCPGAALGLANVELPLAHILYYFNWKLPNGKTFEDLDMTESFGATVQRKTELLLVPTDFQTLTAST.

A helical transmembrane segment spans residues isoleucine 3–threonine 23. Cysteine 432 contacts heme.

This sequence belongs to the cytochrome P450 family. Heme is required as a cofactor.

It is found in the membrane. Its function is as follows. Valencene oxidase, which preferentially hydroylates the C2 position of (+)-valencene in the trans-orientation, producing trans-nootkatol that can be further oxidized to (+)-nootkatone. Can also catalyze the three-step conversion of germacrene A to germacra-1(10),4,11(13)-trien-12-oic acid and the partial conversion of the non-natural substrate amorpha-4,11-diene into artemisinic alcohol and artemisinic aldehyde. This chain is Cytochrome P450 71AV8 (CYP71AV8), found in Cichorium intybus (Chicory).